A 450-amino-acid chain; its full sequence is Tubulin alpha-2 chain (450 aa).

Gln11, Glu71, Gly144, Thr145, Thr179, Asn206, and Asn228 together coordinate GTP. Glu71 contacts Mg(2+). Glu254 is a catalytic residue. Residue Thr349 is modified to Phosphothreonine. Positions 430-450 are disordered; sequence KDYEEVGAEGGDDEDDEGEEY. Residues 431-450 show a composition bias toward acidic residues; the sequence is DYEEVGAEGGDDEDDEGEEY.

This sequence belongs to the tubulin family. In terms of assembly, dimer of alpha and beta chains. A typical microtubule is a hollow water-filled tube with an outer diameter of 25 nm and an inner diameter of 15 nM. Alpha-beta heterodimers associate head-to-tail to form protofilaments running lengthwise along the microtubule wall with the beta-tubulin subunit facing the microtubule plus end conferring a structural polarity. Microtubules usually have 13 protofilaments but different protofilament numbers can be found in some organisms and specialized cells. Requires Mg(2+) as cofactor. Undergoes a tyrosination/detyrosination cycle, the cyclic removal and re-addition of a C-terminal tyrosine residue by the enzymes tubulin tyrosine carboxypeptidase (TTCP) and tubulin tyrosine ligase (TTL), respectively. In terms of processing, acetylation of alpha chains at Lys-40 stabilizes microtubules and affects affinity and processivity of microtubule motors. This modification has a role in multiple cellular functions, ranging from cell motility, cell cycle progression or cell differentiation to intracellular trafficking and signaling.

Its subcellular location is the cytoplasm. It localises to the cytoskeleton. The enzyme catalyses GTP + H2O = GDP + phosphate + H(+). In terms of biological role, tubulin is the major constituent of microtubules, a cylinder consisting of laterally associated linear protofilaments composed of alpha- and beta-tubulin heterodimers. Microtubules grow by the addition of GTP-tubulin dimers to the microtubule end, where a stabilizing cap forms. Below the cap, tubulin dimers are in GDP-bound state, owing to GTPase activity of alpha-tubulin. The chain is Tubulin alpha-2 chain (TUBA2) from Arabidopsis thaliana (Mouse-ear cress).